The following is a 701-amino-acid chain: Polyribonucleotide nucleotidyltransferase (701 aa).

Mg(2+)-binding residues include Asp483 and Asp489. In terms of domain architecture, KH spans 550–609 (PRIYTLHIPTDKIRDVIGPGGKVIRGIIEQTGVKIDVEDDGTIHVASADEASANKAIQII). The region spanning 619 to 686 (GKTYLGKVVR…EGNKIKLSRK (68 aa)) is the S1 motif domain.

It belongs to the polyribonucleotide nucleotidyltransferase family. Requires Mg(2+) as cofactor.

It is found in the cytoplasm. The enzyme catalyses RNA(n+1) + phosphate = RNA(n) + a ribonucleoside 5'-diphosphate. Involved in mRNA degradation. Catalyzes the phosphorolysis of single-stranded polyribonucleotides processively in the 3'- to 5'-direction. The sequence is that of Polyribonucleotide nucleotidyltransferase from Solibacter usitatus (strain Ellin6076).